The primary structure comprises 253 residues: Phosphoadenosine 5'-phosphosulfate reductase (253 aa).

Cys239 serves as the catalytic Nucleophile; cysteine thiosulfonate intermediate.

Belongs to the PAPS reductase family. CysH subfamily.

It is found in the cytoplasm. It catalyses the reaction [thioredoxin]-disulfide + sulfite + adenosine 3',5'-bisphosphate + 2 H(+) = [thioredoxin]-dithiol + 3'-phosphoadenylyl sulfate. It functions in the pathway sulfur metabolism; hydrogen sulfide biosynthesis; sulfite from sulfate: step 3/3. Its function is as follows. Catalyzes the formation of sulfite from phosphoadenosine 5'-phosphosulfate (PAPS) using thioredoxin as an electron donor. The sequence is that of Phosphoadenosine 5'-phosphosulfate reductase from Aliivibrio fischeri (strain MJ11) (Vibrio fischeri).